The following is a 329-amino-acid chain: Ankyrin repeat and SOCS box protein 5 (329 aa).

6 ANK repeats span residues 69 to 98, 102 to 131, 135 to 164, 167 to 196, 200 to 229, and 232 to 261; these read ADRS…NVNA, DHVT…NVNA, DGVT…KAQL, CLPS…DVDQ, HLGT…DVQK, and YWDT…DINA. Residues 278–329 form the SOCS box domain; sequence MVERILLQHEATPSSLYQLCRLCIRSYIGKPRLHLIPQLQLPTLLKNFLQYR.

It belongs to the ankyrin SOCS box (ASB) family.

It participates in protein modification; protein ubiquitination. Functionally, may be a substrate-recognition component of a SCF-like ECS (Elongin-Cullin-SOCS-box protein) E3 ubiquitin-protein ligase complex which mediates the ubiquitination and subsequent proteasomal degradation of target proteins. May play a role in the initiation of arteriogenesis. This is Ankyrin repeat and SOCS box protein 5 (ASB5) from Homo sapiens (Human).